A 345-amino-acid chain; its full sequence is Phosphoribosylformylglycinamidine cyclo-ligase (345 aa).

This sequence belongs to the AIR synthase family.

The protein resides in the cytoplasm. It catalyses the reaction 2-formamido-N(1)-(5-O-phospho-beta-D-ribosyl)acetamidine + ATP = 5-amino-1-(5-phospho-beta-D-ribosyl)imidazole + ADP + phosphate + H(+). It participates in purine metabolism; IMP biosynthesis via de novo pathway; 5-amino-1-(5-phospho-D-ribosyl)imidazole from N(2)-formyl-N(1)-(5-phospho-D-ribosyl)glycinamide: step 2/2. In Pasteurella multocida (strain Pm70), this protein is Phosphoribosylformylglycinamidine cyclo-ligase.